We begin with the raw amino-acid sequence, 802 residues long: Leucine--tRNA ligase (802 aa).

Residues 40–51 carry the 'HIGH' region motif; that stretch reads PYPSGAGLHVGH. A 'KMSKS' region motif is present at residues 576 to 580; it reads KMSKS. Lys579 lines the ATP pocket.

This sequence belongs to the class-I aminoacyl-tRNA synthetase family.

Its subcellular location is the cytoplasm. The catalysed reaction is tRNA(Leu) + L-leucine + ATP = L-leucyl-tRNA(Leu) + AMP + diphosphate. This chain is Leucine--tRNA ligase, found in Bacillus cytotoxicus (strain DSM 22905 / CIP 110041 / 391-98 / NVH 391-98).